The chain runs to 304 residues: CBY1-interacting BAR domain-containing protein 2 (304 aa).

The interval 6–217 (SRDSQVRVME…EKYDLERDLL (212 aa)) is BAR-like.

This sequence belongs to the CIBAR family. Homodimer (via BAR-like domain). Heterodimer (via BAR-like domain) with FAM92A. Interacts with CBY1. Restricted to certain tissues, most prominently expressed in multicilaited tissues.

It is found in the cytoplasm. It localises to the cytoskeleton. The protein localises to the microtubule organizing center. The protein resides in the centrosome. Its subcellular location is the centriole. It is found in the cilium basal body. Its function is as follows. May play a role in ciliogenesis. In cooperation with CBY1 may facilitate ciliogenesis likely by the recruitment and fusion of endosomal vesicles at distal appendages during early stages of ciliogenesis. This Homo sapiens (Human) protein is CBY1-interacting BAR domain-containing protein 2.